The chain runs to 154 residues: Ribosome maturation factor RimP (154 aa).

This sequence belongs to the RimP family.

The protein localises to the cytoplasm. In terms of biological role, required for maturation of 30S ribosomal subunits. The polypeptide is Ribosome maturation factor RimP (Hydrogenobaculum sp. (strain Y04AAS1)).